Consider the following 153-residue polypeptide: Xanthine-guanine phosphoribosyltransferase (153 aa).

5-phospho-alpha-D-ribose 1-diphosphate contacts are provided by residues 37–38 (RG), R69, and 88–96 (DDLVDTGGT). R69 is a GMP binding site. D89 is a Mg(2+) binding site. Residues D92 and I135 each coordinate guanine. 2 residues coordinate xanthine: D92 and I135. Residues 92–96 (DTGGT) and 134–135 (WI) contribute to the GMP site.

Belongs to the purine/pyrimidine phosphoribosyltransferase family. XGPT subfamily. Homotetramer. Requires Mg(2+) as cofactor.

The protein localises to the cell membrane. The catalysed reaction is GMP + diphosphate = guanine + 5-phospho-alpha-D-ribose 1-diphosphate. The enzyme catalyses XMP + diphosphate = xanthine + 5-phospho-alpha-D-ribose 1-diphosphate. It carries out the reaction IMP + diphosphate = hypoxanthine + 5-phospho-alpha-D-ribose 1-diphosphate. It functions in the pathway purine metabolism; GMP biosynthesis via salvage pathway; GMP from guanine: step 1/1. The protein operates within purine metabolism; XMP biosynthesis via salvage pathway; XMP from xanthine: step 1/1. Functionally, purine salvage pathway enzyme that catalyzes the transfer of the ribosyl-5-phosphate group from 5-phospho-alpha-D-ribose 1-diphosphate (PRPP) to the N9 position of the 6-oxopurines guanine and xanthine to form the corresponding ribonucleotides GMP (guanosine 5'-monophosphate) and XMP (xanthosine 5'-monophosphate), with the release of PPi. To a lesser extent, also acts on hypoxanthine. This Buchnera aphidicola subsp. Baizongia pistaciae (strain Bp) protein is Xanthine-guanine phosphoribosyltransferase.